We begin with the raw amino-acid sequence, 361 residues long: MAGNTIGQLFRVTTFGESHGIALGCIIDGCPPGLSLTEKDMQHDLDRRRPGTSKYTTQRREADEVKILSGVFEGQTTGTSIGLLIENTDQRSKDYSNIQDLFRPGHADYTYHQKYGVRDYRGGGRSSARETAMRVAAGAVAKKYLKQIHGIEVRAYLSQMGAVKIDKVDWEQIEQNAFFCPDADKVDAFDELIRKLKKEGDSIGAKLTVVASNVPVGLGEPVFDRLDADVAHSLMSINAVKGVEIGDGFEVIEQRGSQHRDEMTLDGFKTNHAGGILGGISSGQNIVAHIALKPTSSITVPGETITSKGESAEVITKGRHDPCVGIRAVPIAEAMLAITLMDHLLRHRGQNADVVTTTPKI.

Positions 38 to 49 (EKDMQHDLDRRR) are enriched in basic and acidic residues. A disordered region spans residues 38 to 58 (EKDMQHDLDRRRPGTSKYTTQ). Residue arginine 48 participates in NADP(+) binding. Residues 125 to 127 (RSS), 238 to 239 (NA), glycine 278, 293 to 297 (KPTSS), and arginine 319 contribute to the FMN site.

It belongs to the chorismate synthase family. As to quaternary structure, homotetramer. FMNH2 serves as cofactor.

The enzyme catalyses 5-O-(1-carboxyvinyl)-3-phosphoshikimate = chorismate + phosphate. It functions in the pathway metabolic intermediate biosynthesis; chorismate biosynthesis; chorismate from D-erythrose 4-phosphate and phosphoenolpyruvate: step 7/7. In terms of biological role, catalyzes the anti-1,4-elimination of the C-3 phosphate and the C-6 proR hydrogen from 5-enolpyruvylshikimate-3-phosphate (EPSP) to yield chorismate, which is the branch point compound that serves as the starting substrate for the three terminal pathways of aromatic amino acid biosynthesis. This reaction introduces a second double bond into the aromatic ring system. The polypeptide is Chorismate synthase (Photobacterium profundum (strain SS9)).